A 357-amino-acid chain; its full sequence is uncharacterized protein (357 aa).

A signal peptide spans 1 to 19 (MKRILSFIFIILFFNSSYA).

This is an uncharacterized protein from Rickettsia prowazekii (strain Madrid E).